The sequence spans 862 residues: DNA gyrase subunit A (862 aa).

In terms of domain architecture, Topo IIA-type catalytic spans 38–501; the sequence is LPDARDGLKP…DYDDIDVEDL (464 aa). The active-site O-(5'-phospho-DNA)-tyrosine intermediate is the tyrosine 126. The GyrA-box motif lies at 528 to 534; sequence QKRGGKG. Positions 843 to 862 are disordered; the sequence is KEESDDDDIVADDTQEQDME. Residues 845-862 are compositionally biased toward acidic residues; sequence ESDDDDIVADDTQEQDME.

Belongs to the type II topoisomerase GyrA/ParC subunit family. Heterotetramer, composed of two GyrA and two GyrB chains. In the heterotetramer, GyrA contains the active site tyrosine that forms a transient covalent intermediate with DNA, while GyrB binds cofactors and catalyzes ATP hydrolysis.

The protein localises to the cytoplasm. It catalyses the reaction ATP-dependent breakage, passage and rejoining of double-stranded DNA.. Functionally, a type II topoisomerase that negatively supercoils closed circular double-stranded (ds) DNA in an ATP-dependent manner to modulate DNA topology and maintain chromosomes in an underwound state. Negative supercoiling favors strand separation, and DNA replication, transcription, recombination and repair, all of which involve strand separation. Also able to catalyze the interconversion of other topological isomers of dsDNA rings, including catenanes and knotted rings. Type II topoisomerases break and join 2 DNA strands simultaneously in an ATP-dependent manner. This is DNA gyrase subunit A from Campylobacter fetus.